A 120-amino-acid polypeptide reads, in one-letter code: MFPGMGGVGGRGMNPAKMKQMMKQMGIDVKELKDVEEVVIKTADSNIVIENANVTIMTVQGSETYQIVGDVKEVPKSLEIPAEDIKLVMEQTGVSEEEARNALKNSNGDLAEAIVALSSA.

Positions 12–80 constitute an NAC-A/B domain; it reads GMNPAKMKQM…VKEVPKSLEI (69 aa).

This sequence belongs to the NAC-alpha family. In terms of assembly, homodimer. Interacts with the ribosome. Binds ribosomal RNA.

In terms of biological role, contacts the emerging nascent chain on the ribosome. The chain is Nascent polypeptide-associated complex protein from Methanosarcina mazei (strain ATCC BAA-159 / DSM 3647 / Goe1 / Go1 / JCM 11833 / OCM 88) (Methanosarcina frisia).